The chain runs to 2162 residues: Calpain-type cysteine protease ADL1 (2162 aa).

Positions 1 to 33 (MEEEEHRGVVLVCSICGFLFAVLGPLSFWILWA) are cleaved as a signal peptide. The Extracellular segment spans residues 34-70 (VNWRPWRLYSWIYARKWPAYVQGPQLSTLCSFFTLFA). Residues 71–91 (WLVVVSPITVLLVWGGILIAL) form a helical membrane-spanning segment. Residues 92-95 (LERN) lie on the Cytoplasmic side of the membrane. Residues 96–116 (IIGLAVIMVGVALLLSFYSIM) traverse the membrane as a helical segment. Residues 117 to 127 (LWWRTQWQSSK) are Extracellular-facing. A helical membrane pass occupies residues 128-148 (AVAYLLLLAVGLLCAYEFCAV). Residues 149 to 164 (YVTTGASASELNSPSG) are Cytoplasmic-facing. Residues 165–185 (FFFGVSAISLAINMLFISKIL) form a helical membrane-spanning segment. Residues 186–236 (FNGSGFDVDEYVRRLYKFAYSDCVEVAPVSCSPDPPDPSELYMTKSSRVLH) are Extracellular-facing. A helical transmembrane segment spans residues 237–257 (LGLLYLCSLMVLVVYSILYGL). Residues 258 to 264 (TSKEARW) are Cytoplasmic-facing. Residues 265–285 (LGALTSVAVVILDWNLGLCSF) traverse the membrane as a helical segment. Over 286 to 294 (RFELLKSRM) the chain is Extracellular. The helical transmembrane segment at 295–315 (IALFVAGTSRVFLICFGVHYW) threads the bilayer. Topologically, residues 316–320 (YLGHC) are cytoplasmic. A helical transmembrane segment spans residues 321-341 (ISYAFVASVLLAAAVSCWLSI). Topologically, residues 342–626 (SNPSVARIDA…LMFHQVAGSP (285 aa)) are extracellular. The segment at 366 to 403 (KGQTSSSNSSDGCGSSVKRSSGSVEAGPHGNATDSMYR) is disordered. Residues 370–381 (SSSNSSDGCGSS) show a composition bias toward low complexity. The helical transmembrane segment at 627-647 (IRAFVVFTLIFIIETVTVAVH) threads the bilayer. Topologically, residues 648–663 (RPKPIKVINATHEQFE) are cytoplasmic. Residues 664–684 (FGFSILLLSPVVCSIMAFIWS) traverse the membrane as a helical segment. Residues 685–697 (LCAEEMTMTSKPR) are Extracellular-facing. The helical transmembrane segment at 698 to 718 (KYGFIAWLLSTCVGLLLSFLS) threads the bilayer. The Cytoplasmic portion of the chain corresponds to 719–722 (KSSV). A helical membrane pass occupies residues 723–743 (ILGLSLTVPLMVACLSFAIPI). Residues 744–773 (WMRNGYRFWIPGGELDSRENIRQAPGKKER) lie on the Extracellular side of the membrane. Residues 774–794 (ALFAISITVFTASVIGLGAIV) form a helical membrane-spanning segment. The Cytoplasmic portion of the chain corresponds to 795–825 (SAKPLDALGYKGWDADKKSFYSPYATSMYLG). Residues 826-846 (WALSSTIAVLATGVIPIVAWF) form a helical membrane-spanning segment. The Extracellular segment spans residues 847–856 (ATYRFSPSSA). Residues 857-877 (ICVGLFATVLVSFCGVSYWGV) traverse the membrane as a helical segment. Over 878-890 (VNSRQDGVPLKAD) the chain is Cytoplasmic. A helical membrane pass occupies residues 891-911 (FLAALLPLLCIPAVFSLFTGM). Residues 912–924 (YKWKDDDWKISRG) are Extracellular-facing. A helical membrane pass occupies residues 925–945 (VYLFVGMGVLLLLGAISAVIV). Over 946–949 (TIRP) the chain is Cytoplasmic. The chain crosses the membrane as a helical span at residues 950–970 (WTVGVACLLVILFLVFAIGVI). Residues 971–984 (HYWTSNNFYLTRTQ) are Extracellular-facing. The chain crosses the membrane as a helical span at residues 985–1005 (MLLVCSLAFLLALAAFLMGLF). Residues 1006 to 1019 (QEKPFVGASIGYFS) lie on the Cytoplasmic side of the membrane. A helical transmembrane segment spans residues 1020 to 1040 (FLFLLTGRALTVLLSPPIVVY). Topologically, residues 1041 to 1063 (SPRVLPVYVYDAHADSAKNVSYA) are extracellular. Residues 1064-1084 (FLILYGIALATEVWGVIASLI) form a helical membrane-spanning segment. At 1085–2162 (LNPPFIGAAI…TKAPIKLEAV (1078 aa)) the chain is on the cytoplasmic side. Ser1372 and Ser1377 each carry phosphoserine. Residues 1418–1611 (TGRHCGEIDL…ICSAEYGLFD (194 aa)) enclose the Calpain catalytic 1 domain. At Ser1668 the chain carries Phosphoserine. The 303-residue stretch at 1706–2008 (NFTDQEFPPD…FRSIYVCRVY (303 aa)) folds into the Calpain catalytic 2 domain. Catalysis depends on residues Cys1772, His1930, and Asn1950.

It belongs to the peptidase C2 family. In terms of processing, autocatalytic proteolytic cleavage leading to the production of mainly cytoplasmic localized subproducts of about 85 and 120 kDa. Ubiquitously expressed with higher levels in embryos, vasculatures, leaf primordia, leaf margins, and shoot apical meristem (SAM).

The protein resides in the endoplasmic reticulum membrane. The protein localises to the cytoplasm. It is found in the cell membrane. Its subcellular location is the endosome membrane. Its function is as follows. Essential protease involved in epiderm development. Required for aleurone cell development in the endosperm probably by maintaining and restricting the aleurone and embryonic epidermal L1 cell-layer fates as well as meristems organization. Involved in the maintenance of adaxial/abaxial axis information in developing leaves, probably by regulating cell proliferation and expansion. Does not need calcium ions to be active. The chain is Calpain-type cysteine protease ADL1 (ADL1) from Oryza sativa subsp. japonica (Rice).